We begin with the raw amino-acid sequence, 269 residues long: Lipid II flippase Amj (269 aa).

Helical transmembrane passes span 1-21, 31-51, 84-104, 105-125, 161-181, 192-212, and 245-265; these read MHVITTQVLFIFCFLLLIHSI, SGARVGFIASALSLFNVMVIV, FLIFGSTVGTILGIILLPSFV, ALFSRAIIHLAGGGGSVFQVF, LFVINMLITSIYTIGVLSALY, TAVMASGLINGIATMLLAIFV, and VAGTLLAQLMFIPGAYYIAWL.

This sequence belongs to the Amj family.

The protein localises to the cell membrane. Its pathway is cell wall biogenesis; peptidoglycan biosynthesis. Involved in peptidoglycan biosynthesis. Transports lipid-linked peptidoglycan precursors from the inner to the outer leaflet of the cytoplasmic membrane. May serve as a defense mechanism against naturally occurring MurJ antagonists. The protein is Lipid II flippase Amj of Bacillus subtilis (strain 168).